The primary structure comprises 138 residues: Large ribosomal subunit protein bL19 (138 aa).

The protein belongs to the bacterial ribosomal protein bL19 family.

This protein is located at the 30S-50S ribosomal subunit interface and may play a role in the structure and function of the aminoacyl-tRNA binding site. This Rickettsia rickettsii (strain Iowa) protein is Large ribosomal subunit protein bL19.